The primary structure comprises 103 residues: SOSS complex subunit C (103 aa).

This sequence belongs to the SOSS-C family. Belongs to the multiprotein complex Integrator. Component of the SOSS complex, composed of soss-b (soss-b1/nabp2 or soss-b2/nabp1), soss-a/ints3 and soss-c/inip.

The protein localises to the nucleus. Functionally, component of the SOSS complex, a multiprotein complex that functions downstream of the MRN complex to promote DNA repair and G2/M checkpoint. The SOSS complex associates with single-stranded DNA at DNA lesions and influences diverse endpoints in the cellular DNA damage response including cell-cycle checkpoint activation, recombinational repair and maintenance of genomic stability. Required for efficient homologous recombination-dependent repair of double-strand breaks (DSBs). The polypeptide is SOSS complex subunit C (inip) (Danio rerio (Zebrafish)).